The following is a 365-amino-acid chain: Red-sensitive opsin (365 aa).

The Extracellular portion of the chain corresponds to 1–51 (MASQLNEAIFAARRRNDDDDTTRSSVFTYTNSNNTRGPFEGPNYHIAPRWV). A glycan (N-linked (GlcNAc...) asparagine) is linked at Asn-33. The chain crosses the membrane as a helical span at residues 52–76 (YNLTSIWMIFVVFASVFTNGLVIVA). Topologically, residues 77-88 (TLKFKKLRHPLN) are cytoplasmic. Residues 89 to 113 (WILVNMAIADLGETVIASTISVFNQ) form a helical membrane-spanning segment. The Extracellular segment spans residues 114 to 128 (IFGYFILGHPMCVLE). A disulfide bridge links Cys-125 with Cys-202. The helical transmembrane segment at 129-148 (GFTVSTCGITALWSLTVIAW) threads the bilayer. The Cytoplasmic portion of the chain corresponds to 149–167 (ERWFVVCKPFGNIKFDEKL). The chain crosses the membrane as a helical span at residues 168–191 (AATGIIFSWVWSAGWCAPPMFGWS). Over 192 to 217 (RFWPHGLKTSCGPDVFSGSSDPGVQS) the chain is Extracellular. A helical membrane pass occupies residues 218-245 (YMLVLMITCCIIPLAIIILCYLHVWWTI). Residues 246 to 267 (RQVAQQQKESESTQKAEREVSR) lie on the Cytoplasmic side of the membrane. Residues 268–291 (MVVVMIVAYIFCWGPYTFFACFAA) form a helical membrane-spanning segment. Over 292–299 (FSPGYSFH) the chain is Extracellular. A helical membrane pass occupies residues 300–324 (PLAAALPAYFAKSATIYNPIIYVFM). Position 311 is an N6-(retinylidene)lysine (Lys-311). Residues 325 to 365 (NRQFRNCIYQMFGKKVDDGSEVSSTSRTEVSSVSNSSVSPA) lie on the Cytoplasmic side of the membrane. The segment at 342–365 (DGSEVSSTSRTEVSSVSNSSVSPA) is disordered. Residues 345–365 (EVSSTSRTEVSSVSNSSVSPA) show a composition bias toward low complexity.

It belongs to the G-protein coupled receptor 1 family. Opsin subfamily. In terms of processing, phosphorylated on some or all of the serine and threonine residues present in the C-terminal region.

The protein resides in the membrane. In terms of biological role, visual pigments are the light-absorbing molecules that mediate vision. They consist of an apoprotein, opsin, covalently linked to cis-retinal. In Xenopus laevis (African clawed frog), this protein is Red-sensitive opsin (opn1lw1).